A 569-amino-acid chain; its full sequence is Arginine--tRNA ligase (569 aa).

The 'HIGH' region motif lies at 123 to 133 (PNIAKRMHIGH).

Belongs to the class-I aminoacyl-tRNA synthetase family. Monomer.

The protein resides in the cytoplasm. It carries out the reaction tRNA(Arg) + L-arginine + ATP = L-arginyl-tRNA(Arg) + AMP + diphosphate. This chain is Arginine--tRNA ligase, found in Fusobacterium nucleatum subsp. nucleatum (strain ATCC 25586 / DSM 15643 / BCRC 10681 / CIP 101130 / JCM 8532 / KCTC 2640 / LMG 13131 / VPI 4355).